Here is an 85-residue protein sequence, read N- to C-terminus: uncharacterized protein (85 aa).

This is an uncharacterized protein from Treponema pallidum (strain Nichols).